Consider the following 597-residue polypeptide: uncharacterized protein (597 aa).

Helical transmembrane passes span 37-57 (VLIILLGVVTQFLTNGGLWPV), 67-87 (IFWLYVGFALVFTVLAFLQFA), 109-129 (GGERIVIFFPLYLVPLTYAAI), 134-154 (SVSLLSGLLAAVAYMAAFIAW), and 162-182 (ALMTLLDYVALALRGTTLAIV). Positions 393 to 597 (HQLARDLHDG…QITIFVPIES (205 aa)) constitute a Histidine kinase domain.

The protein localises to the cell membrane. This is an uncharacterized protein from Chloroflexus aurantiacus (strain ATCC 29366 / DSM 635 / J-10-fl).